Reading from the N-terminus, the 265-residue chain is Silencing boundary-establishment protein FUB1-like protein (265 aa).

Positions 194–265 (HPENRSRNEQ…MPPGSSDMFM (72 aa)) are disordered.

The protein belongs to the proteasome inhibitor PI31 family. In terms of assembly, interacts with the 20S proteasome.

Its subcellular location is the cytoplasm. The protein resides in the nucleus. Its function is as follows. May play a role in the establishment of transcriptional silencing boundaries, preventing the propagation of heterochromatic silencing. The polypeptide is Silencing boundary-establishment protein FUB1-like protein (Schizosaccharomyces pombe (strain 972 / ATCC 24843) (Fission yeast)).